Here is a 227-residue protein sequence, read N- to C-terminus: ATP-dependent Clp protease proteolytic subunit 1 (227 aa).

The active-site Nucleophile is Ser124. His149 is an active-site residue.

It belongs to the peptidase S14 family. In terms of assembly, fourteen ClpP subunits assemble into 2 heptameric rings which stack back to back to give a disk-like structure with a central cavity, resembling the structure of eukaryotic proteasomes.

The protein localises to the cytoplasm. It catalyses the reaction Hydrolysis of proteins to small peptides in the presence of ATP and magnesium. alpha-casein is the usual test substrate. In the absence of ATP, only oligopeptides shorter than five residues are hydrolyzed (such as succinyl-Leu-Tyr-|-NHMec, and Leu-Tyr-Leu-|-Tyr-Trp, in which cleavage of the -Tyr-|-Leu- and -Tyr-|-Trp bonds also occurs).. Cleaves peptides in various proteins in a process that requires ATP hydrolysis. Has a chymotrypsin-like activity. Plays a major role in the degradation of misfolded proteins. In Rhodopirellula baltica (strain DSM 10527 / NCIMB 13988 / SH1), this protein is ATP-dependent Clp protease proteolytic subunit 1.